Consider the following 249-residue polypeptide: Putative ABC transporter ATP-binding protein GSU1281 (249 aa).

Residues 6 to 236 (VEVRDLCHCY…DELLATCRLE (231 aa)) form the ABC transporter domain. Residue 39 to 46 (GANGAGKS) participates in ATP binding.

This sequence belongs to the ABC transporter superfamily.

It is found in the cell inner membrane. Functionally, probably part of an ABC transporter complex. Responsible for energy coupling to the transport system. The chain is Putative ABC transporter ATP-binding protein GSU1281 from Geobacter sulfurreducens (strain ATCC 51573 / DSM 12127 / PCA).